Consider the following 2804-residue polypeptide: Nipped-B-like protein (2804 aa).

2 stretches are compositionally biased toward polar residues: residues 128–173 and 191–208; these read LSQN…QNSP and HPSS…SVSS. Residues 128–340 are disordered; it reads LSQNSMHSSP…LGKDEKEQSE (213 aa). Residues Ser-150 and Ser-162 each carry the phosphoserine modification. The span at 234–249 shows a compositional bias: basic and acidic residues; the sequence is HHADNPRHGSSEDYLH. 8 positions are modified to phosphoserine: Ser-243, Ser-256, Ser-274, Ser-280, Ser-284, Ser-301, Ser-306, and Ser-318. The span at 331–340 shows a compositional bias: basic and acidic residues; sequence LGKDEKEQSE. Ser-350 carries the phosphoserine modification. Residues 482–500 are compositionally biased toward basic and acidic residues; that stretch reads RESAIERERFSKEVQDKDK. A disordered region spans residues 482–946; that stretch reads RESAIERERF…NKAEFPSYLL (465 aa). The span at 523–534 shows a compositional bias: polar residues; that stretch reads PASQETGSTGNG. 4 stretches are compositionally biased toward basic and acidic residues: residues 562–572, 593–663, 672–685, and 694–939; these read DSIKKPEEIKQ, PENH…ECKQ, KQNE…KPND, and ETTK…DNKA. Phosphothreonine occurs at positions 713 and 746. At Ser-912 the chain carries Phosphoserine. The PxVxL motif motif lies at 996–1009; sequence NKGAKPVVVLQKLS. 2 disordered regions span residues 1017 to 1047 and 1060 to 1191; these read IKDR…DQSV and ESTM…LTPE. Lys-1082 carries the post-translational modification N6-acetyllysine. Phosphoserine is present on residues Ser-1089, Ser-1090, and Ser-1096. Acidic residues predominate over residues 1089–1100; it reads SSDEDNDSDEAF. A compositionally biased stretch (basic and acidic residues) spans 1109–1139; sequence KDDDKAWEYEERDRRSSGDHRRSGHSHEGRR. Ser-1150, Ser-1152, and Ser-1154 each carry phosphoserine. Tyr-1159 carries the post-translational modification Phosphotyrosine. Ser-1160 bears the Phosphoserine mark. Positions 1171–1182 are enriched in basic residues; it reads KMKKKEKQKKRK. Thr-1189 is subject to Phosphothreonine. A Phosphoserine modification is found at Ser-1197. The interval 1691–1710 is disordered; it reads AMKSQKDEESSEGTHHAKEI. HEAT repeat units lie at residues 1767–1805, 1843–1881, 1945–1984, 2227–2267, and 2313–2351; these read AQSF…VDPS, PQLA…EQPT, YDWF…HILK, VNLK…LKEM, and LIHP…KYAG. Basic and acidic residues predominate over residues 2473–2489; that stretch reads VKDKRKERKSSPSKENE. 2 disordered regions span residues 2473–2520 and 2651–2696; these read VKDK…DDIN and TSLL…DSTE. Phosphoserine is present on residues Ser-2493, Ser-2509, Ser-2511, Ser-2513, Ser-2515, Ser-2652, and Ser-2658. A compositionally biased stretch (acidic residues) spans 2510-2519; that stretch reads DSDSDSEDDI. Thr-2667 is modified (phosphothreonine). At Ser-2672 the chain carries Phosphoserine.

This sequence belongs to the SCC2/Nipped-B family. As to quaternary structure, heterodimerizes with MAU2/SCC4 to form the cohesin loading complex. The NIPBL-MAU2 heterodimer interacts with the cohesin complex composed of SMC1A/B and SMC3 heterodimer, RAD21 and STAG1/SA1. NIPBL directly contacts all members of the complex, RAD21, SMC1A/B, SMC3 and STAG1. Interacts directly (via PxVxL motif) with CBX5. Interacts with ZNF609 (via N-terminus). Interacts with the multiprotein complex Integrator. Interacts (via PxVxL motif) with CBX3. Interacts with BRD4. As to expression, widely expressed. Highly expressed in heart, skeletal muscle, fetal and adult liver, fetal and adult kidney. Expressed at intermediates level in thymus, placenta, peripheral leukocyte and small intestine. Weakly or not expressed in brain, colon, spleen and lung.

It localises to the nucleus. Its subcellular location is the chromosome. Functionally, plays an important role in the loading of the cohesin complex on to DNA. Forms a heterodimeric complex (also known as cohesin loading complex) with MAU2/SCC4 which mediates the loading of the cohesin complex onto chromatin. Plays a role in cohesin loading at sites of DNA damage. Its recruitment to double-strand breaks (DSBs) sites occurs in a CBX3-, RNF8- and RNF168-dependent manner whereas its recruitment to UV irradiation-induced DNA damage sites occurs in a ATM-, ATR-, RNF8- and RNF168-dependent manner. Along with ZNF609, promotes cortical neuron migration during brain development by regulating the transcription of crucial genes in this process. Preferentially binds promoters containing paused RNA polymerase II. Up-regulates the expression of SEMA3A, NRP1, PLXND1 and GABBR2 genes, among others. The polypeptide is Nipped-B-like protein (NIPBL) (Homo sapiens (Human)).